The chain runs to 507 residues: Cobyric acid synthase (507 aa).

The GATase cobBQ-type domain occupies 249 to 451; sequence DIEIAVINLP…IHGIFENREF (203 aa). The Nucleophile role is filled by cysteine 330. Histidine 443 is an active-site residue.

This sequence belongs to the CobB/CobQ family. CobQ subfamily.

The protein operates within cofactor biosynthesis; adenosylcobalamin biosynthesis. Its function is as follows. Catalyzes amidations at positions B, D, E, and G on adenosylcobyrinic A,C-diamide. NH(2) groups are provided by glutamine, and one molecule of ATP is hydrogenolyzed for each amidation. The polypeptide is Cobyric acid synthase (Thermoanaerobacter sp. (strain X514)).